Consider the following 398-residue polypeptide: Large ribosomal subunit protein uL3 (398 aa).

Positions 1 to 10 (MSHRKFEAPR) are enriched in basic and acidic residues. The segment at 1 to 34 (MSHRKFEAPRHGNLGFRPRKRAARHQGKVKSFPK) is disordered. The span at 17–28 (RPRKRAARHQGK) shows a compositional bias: basic residues.

It belongs to the universal ribosomal protein uL3 family.

It localises to the cytoplasm. In terms of biological role, the L3 protein is a component of the large subunit of cytoplasmic ribosomes. This is Large ribosomal subunit protein uL3 (rpl3) from Dictyostelium discoideum (Social amoeba).